We begin with the raw amino-acid sequence, 276 residues long: Ribosomal RNA small subunit methyltransferase A (276 aa).

Residues Asn27, Leu29, Gly54, Glu75, Asp101, and Asn122 each coordinate S-adenosyl-L-methionine.

Belongs to the class I-like SAM-binding methyltransferase superfamily. rRNA adenine N(6)-methyltransferase family. RsmA subfamily.

It is found in the cytoplasm. The enzyme catalyses adenosine(1518)/adenosine(1519) in 16S rRNA + 4 S-adenosyl-L-methionine = N(6)-dimethyladenosine(1518)/N(6)-dimethyladenosine(1519) in 16S rRNA + 4 S-adenosyl-L-homocysteine + 4 H(+). Specifically dimethylates two adjacent adenosines (A1518 and A1519) in the loop of a conserved hairpin near the 3'-end of 16S rRNA in the 30S particle. May play a critical role in biogenesis of 30S subunits. This chain is Ribosomal RNA small subunit methyltransferase A, found in Brucella suis (strain ATCC 23445 / NCTC 10510).